Reading from the N-terminus, the 102-residue chain is Large ribosomal subunit protein bL21 (102 aa).

Belongs to the bacterial ribosomal protein bL21 family. Part of the 50S ribosomal subunit. Contacts protein L20.

Functionally, this protein binds to 23S rRNA in the presence of protein L20. This chain is Large ribosomal subunit protein bL21, found in Pelobacter propionicus (strain DSM 2379 / NBRC 103807 / OttBd1).